A 95-amino-acid chain; its full sequence is YcgL domain-containing protein Sden_1630 (95 aa).

In terms of domain architecture, YcgL spans 1 to 85 (MICTVYKSRR…PKANLLEEHK (85 aa)).

The polypeptide is YcgL domain-containing protein Sden_1630 (Shewanella denitrificans (strain OS217 / ATCC BAA-1090 / DSM 15013)).